The sequence spans 479 residues: GTPase Der (479 aa).

EngA-type G domains lie at 3-167 (FKVA…GEAR) and 208-383 (MRIA…KVWN). GTP is bound by residues 9 to 16 (GRPNVGKS), 56 to 60 (DTAGF), 119 to 122 (NKAE), 214 to 221 (GRPNAGKS), 261 to 265 (DTAGM), and 326 to 329 (NKWD). The region spanning 384 to 468 (SRVSTGKLNR…PIRIALRTSD (85 aa)) is the KH-like domain.

Belongs to the TRAFAC class TrmE-Era-EngA-EngB-Septin-like GTPase superfamily. EngA (Der) GTPase family. In terms of assembly, associates with the 50S ribosomal subunit.

GTPase that plays an essential role in the late steps of ribosome biogenesis. In Mesorhizobium japonicum (strain LMG 29417 / CECT 9101 / MAFF 303099) (Mesorhizobium loti (strain MAFF 303099)), this protein is GTPase Der.